The sequence spans 81 residues: X antigen family member 1 (81 aa).

Residue lysine 12 forms a Glycyl lysine isopeptide (Lys-Gly) (interchain with G-Cter in SUMO2) linkage. Serine 20 is subject to Phosphoserine. Residues lysine 61 and lysine 65 each participate in a glycyl lysine isopeptide (Lys-Gly) (interchain with G-Cter in SUMO2) cross-link.

This sequence belongs to the GAGE family. In terms of tissue distribution, in normal tissues, highly expressed in testis. Expressed also in many different types of cancers: highly expressed in breast cancer, prostate cancer and many types of lung cancers, including squamous cell carcinoma, small cell carcinoma, non-small cell carcinoma, and adenocarcinoma, as well as in Ewing's cell lines, in some Ewing's sarcoma patient samples, and in one of one alveolar rhabdomyosarcoma patient sample.

The chain is X antigen family member 1 from Homo sapiens (Human).